The following is a 481-amino-acid chain: Probable glycine dehydrogenase (decarboxylating) subunit 2 (481 aa).

Lys-269 is modified (N6-(pyridoxal phosphate)lysine).

It belongs to the GcvP family. C-terminal subunit subfamily. As to quaternary structure, the glycine cleavage system is composed of four proteins: P, T, L and H. In this organism, the P 'protein' is a heterodimer of two subunits. The cofactor is pyridoxal 5'-phosphate.

It carries out the reaction N(6)-[(R)-lipoyl]-L-lysyl-[glycine-cleavage complex H protein] + glycine + H(+) = N(6)-[(R)-S(8)-aminomethyldihydrolipoyl]-L-lysyl-[glycine-cleavage complex H protein] + CO2. Functionally, the glycine cleavage system catalyzes the degradation of glycine. The P protein binds the alpha-amino group of glycine through its pyridoxal phosphate cofactor; CO(2) is released and the remaining methylamine moiety is then transferred to the lipoamide cofactor of the H protein. The sequence is that of Probable glycine dehydrogenase (decarboxylating) subunit 2 from Chlorobium chlorochromatii (strain CaD3).